Consider the following 522-residue polypeptide: Gypsy retrotransposon integrase-like protein 1 (522 aa).

The Integrase catalytic domain maps to 135–292 (KVENPWSLVT…TPYFQMFSRN (158 aa)). Ser502 is subject to Phosphoserine.

The polypeptide is Gypsy retrotransposon integrase-like protein 1 (GIN1) (Pongo abelii (Sumatran orangutan)).